Reading from the N-terminus, the 197-residue chain is ATP-dependent Clp protease proteolytic subunit 1 (197 aa).

Residue Ser96 is the Nucleophile of the active site. Residue His121 is part of the active site.

Belongs to the peptidase S14 family. As to quaternary structure, fourteen ClpP subunits assemble into 2 heptameric rings which stack back to back to give a disk-like structure with a central cavity, resembling the structure of eukaryotic proteasomes.

It localises to the cytoplasm. It catalyses the reaction Hydrolysis of proteins to small peptides in the presence of ATP and magnesium. alpha-casein is the usual test substrate. In the absence of ATP, only oligopeptides shorter than five residues are hydrolyzed (such as succinyl-Leu-Tyr-|-NHMec, and Leu-Tyr-Leu-|-Tyr-Trp, in which cleavage of the -Tyr-|-Leu- and -Tyr-|-Trp bonds also occurs).. In terms of biological role, cleaves peptides in various proteins in a process that requires ATP hydrolysis. Has a chymotrypsin-like activity. Plays a major role in the degradation of misfolded proteins. The protein is ATP-dependent Clp protease proteolytic subunit 1 of Synechococcus sp. (strain ATCC 27144 / PCC 6301 / SAUG 1402/1) (Anacystis nidulans).